The primary structure comprises 251 residues: Hydroxyacylglutathione hydrolase (251 aa).

Zn(2+)-binding residues include H54, H56, D58, H59, H113, D140, and H178.

It belongs to the metallo-beta-lactamase superfamily. Glyoxalase II family. In terms of assembly, monomer. Zn(2+) is required as a cofactor.

It carries out the reaction an S-(2-hydroxyacyl)glutathione + H2O = a 2-hydroxy carboxylate + glutathione + H(+). Its pathway is secondary metabolite metabolism; methylglyoxal degradation; (R)-lactate from methylglyoxal: step 2/2. Thiolesterase that catalyzes the hydrolysis of S-D-lactoyl-glutathione to form glutathione and D-lactic acid. The chain is Hydroxyacylglutathione hydrolase from Synechococcus sp. (strain CC9902).